The primary structure comprises 585 residues: Arginine--tRNA ligase (585 aa).

The 'HIGH' region signature appears at 131–141 (ANPTGPMHVGH).

This sequence belongs to the class-I aminoacyl-tRNA synthetase family. As to quaternary structure, monomer.

It localises to the cytoplasm. The catalysed reaction is tRNA(Arg) + L-arginine + ATP = L-arginyl-tRNA(Arg) + AMP + diphosphate. This Brucella suis (strain ATCC 23445 / NCTC 10510) protein is Arginine--tRNA ligase.